We begin with the raw amino-acid sequence, 89 residues long: Small ribosomal subunit protein uS14 (89 aa).

This sequence belongs to the universal ribosomal protein uS14 family. As to quaternary structure, part of the 30S ribosomal subunit. Contacts proteins S3 and S10.

Its function is as follows. Binds 16S rRNA, required for the assembly of 30S particles and may also be responsible for determining the conformation of the 16S rRNA at the A site. In Deinococcus radiodurans (strain ATCC 13939 / DSM 20539 / JCM 16871 / CCUG 27074 / LMG 4051 / NBRC 15346 / NCIMB 9279 / VKM B-1422 / R1), this protein is Small ribosomal subunit protein uS14.